Consider the following 555-residue polypeptide: Glutamate--tRNA ligase (555 aa).

The short motif at 100-110 (PNPSGPLHIGH) is the 'HIGH' region element.

This sequence belongs to the class-I aminoacyl-tRNA synthetase family. Glutamate--tRNA ligase type 2 subfamily.

The protein resides in the cytoplasm. It catalyses the reaction tRNA(Glu) + L-glutamate + ATP = L-glutamyl-tRNA(Glu) + AMP + diphosphate. Functionally, catalyzes the attachment of glutamate to tRNA(Glu) in a two-step reaction: glutamate is first activated by ATP to form Glu-AMP and then transferred to the acceptor end of tRNA(Glu). This Methanococcus maripaludis (strain C5 / ATCC BAA-1333) protein is Glutamate--tRNA ligase.